The primary structure comprises 397 residues: P2X purinoceptor 3 (397 aa).

The Cytoplasmic portion of the chain corresponds to 1-20 (MNCISDFFTYETTKSVVVKS). Residues 21-43 (WTIGIINRAVQLLIISYFVGWVF) traverse the membrane as a helical segment. Topologically, residues 44 to 322 (LHEKAYQVRD…AGKFNIIPTI (279 aa)) are extracellular. The ATP site is built by K63 and K65. Disulfide bonds link C107-C153, C116-C137, and C122-C147. E111 lines the Mg(2+) pocket. N-linked (GlcNAc...) asparagine glycosylation is present at N139. D158 is a binding site for Mg(2+). Residue D158 coordinates Ca(2+). N-linked (GlcNAc...) asparagine glycosylation occurs at N170. T172 is an ATP binding site. N194 is a glycosylation site (N-linked (GlcNAc...) asparagine). Intrachain disulfides connect C203–C213 and C247–C256. ATP contacts are provided by S275, N279, and R281. The N-linked (GlcNAc...) asparagine glycan is linked to N290. K299 contributes to the ATP binding site. Residues 323-341 (ISSVAAFTSVGVGTVLCDI) traverse the membrane as a helical segment. The Cytoplasmic segment spans residues 342–397 (ILLNFLKGADHYKARKFEEVTETTLKGTASTNPVFTSDQATVEKQSTDSGAYSIGH).

It belongs to the P2X receptor family. Homotrimer. Forms heterotrimer with P2RX2. Heterotrimeric P2RX2/3 has a ligand dose-response profile that is distinct from either homotrimeric P2RX2 or P2RX3.

It localises to the cell membrane. The enzyme catalyses Ca(2+)(in) = Ca(2+)(out). The catalysed reaction is Na(+)(in) = Na(+)(out). Has high sensitivity to ATP. Fast activation by external ATP. Exhibits rapid desensitization. Sensitives to the ATP agonist:alpha/beta-methylene-ATP. Subject to allosteric inhibition by AF-219. Mg(2+) and Ca(2+) slow deactivation of P2RX3. Its function is as follows. Extracellular ATP-activated non-selective cation channel. Plays particularly important role in sensory neurons where its activation is critical for gustatory, nociceptive responses, visceral reflexes and sensory hypersensitization. This chain is P2X purinoceptor 3 (P2rx3), found in Mus musculus (Mouse).